The following is a 97-amino-acid chain: Conotoxin Cal6.1e (97 aa).

An N-terminal signal peptide occupies residues 1–22; sequence MKLTTVLIVAVLVLAACQFTVT. Positions 23–49 are disordered; that stretch reads DNSGDDTENPSLRSAGENQNPDSTKTI. Residues 23-60 constitute a propeptide that is removed on maturation; sequence DNSGDDTENPSLRSAGENQNPDSTKTITARATRARTNM. The span at 31–45 shows a compositional bias: polar residues; it reads NPSLRSAGENQNPDS. 3 cysteine pairs are disulfide-bonded: Cys71–Cys87, Cys78–Cys91, and Cys86–Cys96.

This sequence belongs to the conotoxin O1 superfamily. Expressed by the venom duct.

The protein localises to the secreted. Probable neurotoxin with unknown target. Possibly targets ion channels. The chain is Conotoxin Cal6.1e from Californiconus californicus (California cone).